Reading from the N-terminus, the 190-residue chain is Putative resolvase R771 (190 aa).

The segment at residues 11–30 is a DNA-binding region (H-T-H motif); it reads SSVLGVHQRTLYQWDKKGWI. The Resolvase/invertase-type recombinase catalytic domain occupies 61 to 190; the sequence is LSICYVRVSS…RNGLKKYSNK (130 aa). The stretch at 66–92 forms a coiled coil; that stretch reads VRVSSNNQKDDLERQIKFMKKKYPNHT. The active-site O-(5'-phospho-DNA)-serine intermediate is S69.

Belongs to the site-specific recombinase resolvase family.

Resolvase catalyzes the resolution (a site-specific recombination) of the cointegrated replicon to yield the final transposition products. The sequence is that of Putative resolvase R771 from Acanthamoeba polyphaga (Amoeba).